The sequence spans 304 residues: Probable aquaporin NIP5-1 (304 aa).

2 consecutive transmembrane segments (helical) span residues 80-100 (LGAE…GPIV) and 106-126 (GAET…IIIL). The NPA 1 motif lies at 137 to 139 (NPS). 3 helical membrane passes run 157-177 (AYIA…KGVF), 195-215 (AFAL…AVAT), and 219-239 (AVGE…ILVA). An NPA 2 motif is present at residues 248-250 (NPV). Residues 266–286 (WVYLVAPTLGAISGAAVYTGV) form a helical membrane-spanning segment. Serine 301 carries the post-translational modification Phosphoserine.

This sequence belongs to the MIP/aquaporin (TC 1.A.8) family. NIP (TC 1.A.8.12) subfamily. In terms of tissue distribution, expressed in rosette leaves.

The protein localises to the cell membrane. Functionally, boric acid transporter. Low water transport activity. Plays an important role as plasma membrane boric acid channel for the boron uptake required for plant growth and development under boron limitation. This is Probable aquaporin NIP5-1 (NIP5-1) from Arabidopsis thaliana (Mouse-ear cress).